The primary structure comprises 346 residues: Elongation factor Ts (346 aa).

Residues 80–83 form an involved in Mg(2+) ion dislocation from EF-Tu region; that stretch reads TDFV.

Belongs to the EF-Ts family.

Its subcellular location is the cytoplasm. In terms of biological role, associates with the EF-Tu.GDP complex and induces the exchange of GDP to GTP. It remains bound to the aminoacyl-tRNA.EF-Tu.GTP complex up to the GTP hydrolysis stage on the ribosome. The polypeptide is Elongation factor Ts (Streptococcus pyogenes serotype M18 (strain MGAS8232)).